The following is a 136-amino-acid chain: Ribonuclease P protein component (136 aa).

This sequence belongs to the RnpA family. Consists of a catalytic RNA component (M1 or rnpB) and a protein subunit.

The enzyme catalyses Endonucleolytic cleavage of RNA, removing 5'-extranucleotides from tRNA precursor.. RNaseP catalyzes the removal of the 5'-leader sequence from pre-tRNA to produce the mature 5'-terminus. It can also cleave other RNA substrates such as 4.5S RNA. The protein component plays an auxiliary but essential role in vivo by binding to the 5'-leader sequence and broadening the substrate specificity of the ribozyme. In Burkholderia pseudomallei (strain 1106a), this protein is Ribonuclease P protein component.